Reading from the N-terminus, the 452-residue chain is Probable phosphoglucosamine mutase (452 aa).

Ser101 serves as the catalytic Phosphoserine intermediate. Residues Ser101, Asp242, Asp244, and Asp246 each coordinate Mg(2+). Residue Ser101 is modified to Phosphoserine.

It belongs to the phosphohexose mutase family. It depends on Mg(2+) as a cofactor. Post-translationally, activated by phosphorylation.

It carries out the reaction alpha-D-glucosamine 1-phosphate = D-glucosamine 6-phosphate. Its function is as follows. Catalyzes the conversion of glucosamine-6-phosphate to glucosamine-1-phosphate. The chain is Probable phosphoglucosamine mutase from Methanosphaera stadtmanae (strain ATCC 43021 / DSM 3091 / JCM 11832 / MCB-3).